Reading from the N-terminus, the 568-residue chain is Probable asparagine--tRNA ligase, cytoplasmic (568 aa).

It belongs to the class-II aminoacyl-tRNA synthetase family.

It is found in the cytoplasm. It catalyses the reaction tRNA(Asn) + L-asparagine + ATP = L-asparaginyl-tRNA(Asn) + AMP + diphosphate + H(+). Its function is as follows. Cytosolic asparaginyl-tRNA synthetase which catalyzes the specific attachment of asparagine to its cognate tRNA. In Schizosaccharomyces pombe (strain 972 / ATCC 24843) (Fission yeast), this protein is Probable asparagine--tRNA ligase, cytoplasmic (nrs1).